We begin with the raw amino-acid sequence, 211 residues long: MLTIALSKGRILDDTLPLLAEAGIVPTENPDKSRKLIIPTTQDDVRLLIVRATDVPTYVEHGAADLGVAGKDVLMEYTGQGLYEPLDLQIAQCKLMTAGAIGAAEPKGRLRVATKFVNVAKRYYAEQGRQVDIIKLYGSMELAPLIGLADKIIDVVDTGNTLRANGLEPQELIATISSRLVVNKASMKMQHARIQALIDTLRKAVESRHRG.

The protein belongs to the ATP phosphoribosyltransferase family. Short subfamily. Heteromultimer composed of HisG and HisZ subunits.

Its subcellular location is the cytoplasm. The catalysed reaction is 1-(5-phospho-beta-D-ribosyl)-ATP + diphosphate = 5-phospho-alpha-D-ribose 1-diphosphate + ATP. It functions in the pathway amino-acid biosynthesis; L-histidine biosynthesis; L-histidine from 5-phospho-alpha-D-ribose 1-diphosphate: step 1/9. Its function is as follows. Catalyzes the condensation of ATP and 5-phosphoribose 1-diphosphate to form N'-(5'-phosphoribosyl)-ATP (PR-ATP). Has a crucial role in the pathway because the rate of histidine biosynthesis seems to be controlled primarily by regulation of HisG enzymatic activity. This chain is ATP phosphoribosyltransferase, found in Pseudomonas fluorescens (strain ATCC BAA-477 / NRRL B-23932 / Pf-5).